The chain runs to 250 residues: 2,3-bisphosphoglycerate-dependent phosphoglycerate mutase (250 aa).

Substrate-binding positions include 10-17 (RHGESQWN), 23-24 (TG), Arg-62, 89-92 (ERHY), Lys-100, 116-117 (RR), and 185-186 (GN). The Tele-phosphohistidine intermediate role is filled by His-11. The active-site Proton donor/acceptor is Glu-89.

The protein belongs to the phosphoglycerate mutase family. BPG-dependent PGAM subfamily. As to quaternary structure, homodimer.

It carries out the reaction (2R)-2-phosphoglycerate = (2R)-3-phosphoglycerate. The protein operates within carbohydrate degradation; glycolysis; pyruvate from D-glyceraldehyde 3-phosphate: step 3/5. In terms of biological role, catalyzes the interconversion of 2-phosphoglycerate and 3-phosphoglycerate. The protein is 2,3-bisphosphoglycerate-dependent phosphoglycerate mutase of Salmonella dublin (strain CT_02021853).